The following is a 431-amino-acid chain: MSKILIRAMVLPMTGPEDFYPEGEIGIENDRILFVGEKGSAPDSFIPDQIIDLPEDVVMPGLINTHTHAAMTMLRSYADDLPLMPWLQTKIWPFEDKMSDEDIYWGTLLALGEMIQSGTTTMLDMYASMDQVAKAVLEAGTRGVLSRGLIGNAPNGERAFAENMDLVKNYHGAGQGRIQVMFGPHAPYTCSGEFLQRVKQEADRLGVGIHIHVAETEDEIKTIKEQYGKTPVQWLEELGLFGGHVVAAHCVHLTEEDQEIMAQNKVFIAHNPESNMKLNSGTAPIPELRSRGVVVGLGTDGTSSNNNLDMFGEMRSAAFQQKLVKGATALPAYEVLQMATVDGARTLGLHDVGVLAPGYKADLISINFDQPHFYPRFSIPAHLVYVAHAGDVRTVMVDGKILMQERQLMTIDIKRVCREVEKRAKGIAQGL.

Zn(2+) is bound by residues H66 and H68. Residues E95, R147, and H185 each contribute to the substrate site. A Zn(2+)-binding site is contributed by H212. Substrate contacts are provided by E215 and D300. Residue D300 participates in Zn(2+) binding.

This sequence belongs to the metallo-dependent hydrolases superfamily. MTA/SAH deaminase family. The cofactor is Zn(2+).

The enzyme catalyses S-adenosyl-L-homocysteine + H2O + H(+) = S-inosyl-L-homocysteine + NH4(+). It carries out the reaction S-methyl-5'-thioadenosine + H2O + H(+) = S-methyl-5'-thioinosine + NH4(+). Catalyzes the deamination of 5-methylthioadenosine and S-adenosyl-L-homocysteine into 5-methylthioinosine and S-inosyl-L-homocysteine, respectively. Is also able to deaminate adenosine. The protein is 5-methylthioadenosine/S-adenosylhomocysteine deaminase of Desulfitobacterium hafniense (strain DSM 10664 / DCB-2).